The sequence spans 364 residues: Chorismate synthase (364 aa).

Arginine 48 and arginine 54 together coordinate NADP(+). FMN contacts are provided by residues arginine 125–serine 127, glycine 282, lysine 297–serine 301, and arginine 323.

It belongs to the chorismate synthase family. Homotetramer. Requires FMNH2 as cofactor.

It catalyses the reaction 5-O-(1-carboxyvinyl)-3-phosphoshikimate = chorismate + phosphate. The protein operates within metabolic intermediate biosynthesis; chorismate biosynthesis; chorismate from D-erythrose 4-phosphate and phosphoenolpyruvate: step 7/7. In terms of biological role, catalyzes the anti-1,4-elimination of the C-3 phosphate and the C-6 proR hydrogen from 5-enolpyruvylshikimate-3-phosphate (EPSP) to yield chorismate, which is the branch point compound that serves as the starting substrate for the three terminal pathways of aromatic amino acid biosynthesis. This reaction introduces a second double bond into the aromatic ring system. In Chloroflexus aurantiacus (strain ATCC 29366 / DSM 635 / J-10-fl), this protein is Chorismate synthase.